A 371-amino-acid polypeptide reads, in one-letter code: Fructose-1,6-bisphosphatase class 1 1 (371 aa).

Mg(2+) is bound by residues Glu-115, Asp-134, Leu-136, and Asp-137. Substrate-binding positions include 137–140, Asn-228, and 280–282; these read DGSS and YLY. Residue Glu-300 coordinates Mg(2+).

Belongs to the FBPase class 1 family. Homotetramer. Mg(2+) is required as a cofactor.

The protein resides in the cytoplasm. It carries out the reaction beta-D-fructose 1,6-bisphosphate + H2O = beta-D-fructose 6-phosphate + phosphate. Its pathway is carbohydrate biosynthesis; gluconeogenesis. This chain is Fructose-1,6-bisphosphatase class 1 1, found in Xanthobacter autotrophicus (strain ATCC BAA-1158 / Py2).